The sequence spans 123 residues: UPF0102 protein CLM_2733 (123 aa).

Belongs to the UPF0102 family.

This chain is UPF0102 protein CLM_2733, found in Clostridium botulinum (strain Kyoto / Type A2).